Here is a 203-residue protein sequence, read N- to C-terminus: Tic20 family protein Ycf60 (203 aa).

Helical transmembrane passes span 2-22, 51-71, 84-104, 131-151, and 153-173; these read IRLFTFGIITMLVLVIARLAI, IIPYYLPLFEGLQNFGQYVLP, ILLPMLIFYMNHAILGLVTFF, ILLFLVGSLFGAIFRAFPIEF, and ISFIGLTVCNMMFWFILSTIT.

The protein belongs to the Tic20 family.

It is found in the plastid. The protein localises to the chloroplast membrane. The sequence is that of Tic20 family protein Ycf60 (ycf60) from Porphyra purpurea (Red seaweed).